The chain runs to 143 residues: 3-hydroxyacyl-[acyl-carrier-protein] dehydratase FabZ (143 aa).

His49 is an active-site residue.

This sequence belongs to the thioester dehydratase family. FabZ subfamily.

Its subcellular location is the cytoplasm. It catalyses the reaction a (3R)-hydroxyacyl-[ACP] = a (2E)-enoyl-[ACP] + H2O. Its function is as follows. Involved in unsaturated fatty acids biosynthesis. Catalyzes the dehydration of short chain beta-hydroxyacyl-ACPs and long chain saturated and unsaturated beta-hydroxyacyl-ACPs. The polypeptide is 3-hydroxyacyl-[acyl-carrier-protein] dehydratase FabZ (Wolbachia pipientis subsp. Culex pipiens (strain wPip)).